The primary structure comprises 237 residues: Ribosomal RNA small subunit methyltransferase G (237 aa).

Positions Met1–Thr25 are disordered. A compositionally biased stretch (low complexity) spans Pro7–Ala21. 3 residues coordinate S-adenosyl-L-methionine: Gly85, Phe90, and Arg155.

This sequence belongs to the methyltransferase superfamily. RNA methyltransferase RsmG family.

It is found in the cytoplasm. The catalysed reaction is guanosine(527) in 16S rRNA + S-adenosyl-L-methionine = N(7)-methylguanosine(527) in 16S rRNA + S-adenosyl-L-homocysteine. Functionally, specifically methylates the N7 position of guanine in position 527 of 16S rRNA. In Rhodopseudomonas palustris (strain HaA2), this protein is Ribosomal RNA small subunit methyltransferase G.